A 132-amino-acid polypeptide reads, in one-letter code: Minor structural pilin EpdB (132 aa).

Residues 1 to 4 (MSKG) constitute a propeptide that is removed on maturation. The QXSXEXXXL motif lies at 9–19 (EFIVLFLALLV).

The N-terminus is probably cleaved by the prepilin peptidase EppA, which recognizes the class III signal sequence.

The protein localises to the secreted. The protein resides in the cell surface. It localises to the fimbrium. Its function is as follows. Minor component of the type IV-like pili. Essential for pili formation. The protein is Minor structural pilin EpdB of Methanococcus maripaludis (strain DSM 14266 / JCM 13030 / NBRC 101832 / S2 / LL).